Reading from the N-terminus, the 235-residue chain is MAAERSLWVVGLCPGSRLGRVVRVLLLLLWFAARGGALYFHIGETEKKCFIEEIPDETMVIGNYRTQLYDKQREEYQPATPGLGMFVEVKDPEDKVILARQYGSEGRFTFTSHTPGEHQICLHSNSTKFSLFAGGMLRVHLDIQVGEHANDYAEIAAKDKLSELQLRVRQLVEQVEQIQKEQNYQRWREERFRQTSESTNQRVLWWSILQTLILVAIGVWQMRHLKSFFEAKKLV.

The N-terminal stretch at 1–37 (MAAERSLWVVGLCPGSRLGRVVRVLLLLLWFAARGGA) is a signal peptide. Topologically, residues 38 to 201 (LYFHIGETEK…FRQTSESTNQ (164 aa)) are lumenal. Residues 47–145 (KKCFIEEIPD…MLRVHLDIQV (99 aa)) enclose the GOLD domain. The required for interaction with STX17 stretch occupies residues 121-160 (CLHSNSTKFSLFAGGMLRVHLDIQVGEHANDYAEIAAKDK). Residue asparagine 125 is glycosylated (N-linked (GlcNAc...) asparagine). The stretch at 154–184 (EIAAKDKLSELQLRVRQLVEQVEQIQKEQNY) forms a coiled coil. The residue at position 160 (lysine 160) is an N6-acetyllysine. A helical membrane pass occupies residues 202 to 222 (RVLWWSILQTLILVAIGVWQM). Residues 223–235 (RHLKSFFEAKKLV) lie on the Cytoplasmic side of the membrane. Residues 228–229 (FF) carry the COPII vesicle coat-binding motif. Residues 228-235 (FFEAKKLV) carry the COPI vesicle coat-binding motif.

Belongs to the EMP24/GP25L family. In terms of assembly, monomer and homodimer in endoplasmic reticulum. Predominantly monomeric and to lesser extent homodimeric in endoplasmic reticulum-Golgi intermediate compartment and cis-Golgi network. Probably oligomerizes with other members of the EMP24/GP25L family such as TMED2, TMED7 and TMED10. Interacts with TMED5. Interacts (via C-terminus) with COPG1; the interaction involves dimeric TMED9. Interacts with PTPN2 and SPAST. Interacts with STX17; the interaction is direct. In terms of processing, N-linked glycosylated containing high mannose.

It is found in the endoplasmic reticulum membrane. The protein localises to the golgi apparatus. The protein resides in the cis-Golgi network membrane. Its subcellular location is the endoplasmic reticulum-Golgi intermediate compartment membrane. It localises to the trans-Golgi network membrane. In terms of biological role, appears to be involved in vesicular protein trafficking, mainly in the early secretory pathway. In COPI vesicle-mediated retrograde transport involved in the coatomer recruitment to membranes of the early secretory pathway. Increases coatomer-dependent activity of ARFGAP2. Thought to play a crucial role in the specific retention of p24 complexes in cis-Golgi membranes; specifically contributes to the coupled localization of TMED2 and TMED10 in the cis-Golgi network. May be involved in organization of intracellular membranes, such as of the ER-Golgi intermediate compartment and the Golgi apparatus. Involved in ER localization of PTPN2. The sequence is that of Transmembrane emp24 domain-containing protein 9 (TMED9) from Bos taurus (Bovine).